Consider the following 499-residue polypeptide: Cysteine--tRNA ligase (499 aa).

Cys-30 is a Zn(2+) binding site. The 'HIGH' region signature appears at 32-42; it reads PTVYDRAHLGN. Zn(2+) contacts are provided by Cys-221, His-246, and Glu-250. The 'KMSKS' region signature appears at 279 to 283; sequence KMSKS. Lys-282 lines the ATP pocket.

Belongs to the class-I aminoacyl-tRNA synthetase family. Monomer. The cofactor is Zn(2+).

Its subcellular location is the cytoplasm. It catalyses the reaction tRNA(Cys) + L-cysteine + ATP = L-cysteinyl-tRNA(Cys) + AMP + diphosphate. This Cereibacter sphaeroides (strain ATCC 17023 / DSM 158 / JCM 6121 / CCUG 31486 / LMG 2827 / NBRC 12203 / NCIMB 8253 / ATH 2.4.1.) (Rhodobacter sphaeroides) protein is Cysteine--tRNA ligase.